Reading from the N-terminus, the 589-residue chain is O-fucosyltransferase 11 (589 aa).

The tract at residues 1-37 (MKSKIHHQPNGSNNGVVSSNDNGCRSESPSPPLSPNR) is disordered. Low complexity predominate over residues 10 to 23 (NGSNNGVVSSNDNG). A helical; Signal-anchor for type II membrane protein transmembrane segment spans residues 68-88 (MIYASGLLMCVGPFSGLVGWV). Asn-112, Asn-136, and Asn-239 each carry an N-linked (GlcNAc...) asparagine glycan. 332-334 (HLR) is a binding site for substrate. N-linked (GlcNAc...) asparagine glycans are attached at residues Asn-405, Asn-406, and Asn-564.

Belongs to the glycosyltransferase GT106 family.

The protein localises to the membrane. It functions in the pathway glycan metabolism. This Arabidopsis thaliana (Mouse-ear cress) protein is O-fucosyltransferase 11.